The following is a 717-amino-acid chain: DNA ligase (717 aa).

Residues 41 to 45 (DARYD), 90 to 91 (SL), and Glu-124 each bind NAD(+). Lys-126 acts as the N6-AMP-lysine intermediate in catalysis. Residues Arg-147, Glu-183, Lys-299, and Lys-323 each contribute to the NAD(+) site. Positions 428, 431, 446, and 452 each coordinate Zn(2+). Residues 636-717 (ADYSPVAGKT…WLQLINEHHI (82 aa)) enclose the BRCT domain.

Belongs to the NAD-dependent DNA ligase family. LigA subfamily. The cofactor is Mg(2+). It depends on Mn(2+) as a cofactor.

The catalysed reaction is NAD(+) + (deoxyribonucleotide)n-3'-hydroxyl + 5'-phospho-(deoxyribonucleotide)m = (deoxyribonucleotide)n+m + AMP + beta-nicotinamide D-nucleotide.. DNA ligase that catalyzes the formation of phosphodiester linkages between 5'-phosphoryl and 3'-hydroxyl groups in double-stranded DNA using NAD as a coenzyme and as the energy source for the reaction. It is essential for DNA replication and repair of damaged DNA. This is DNA ligase from Bartonella bacilliformis (strain ATCC 35685 / KC583 / Herrer 020/F12,63).